A 415-amino-acid chain; its full sequence is Histidine--tRNA ligase (415 aa).

Belongs to the class-II aminoacyl-tRNA synthetase family. As to quaternary structure, homodimer.

It localises to the cytoplasm. It catalyses the reaction tRNA(His) + L-histidine + ATP = L-histidyl-tRNA(His) + AMP + diphosphate + H(+). This chain is Histidine--tRNA ligase, found in Clostridium perfringens (strain ATCC 13124 / DSM 756 / JCM 1290 / NCIMB 6125 / NCTC 8237 / Type A).